The sequence spans 778 residues: Endonuclease MutS2 (778 aa).

Position 328 to 335 (328 to 335 (GPNTGGKT)) interacts with ATP. In terms of domain architecture, Smr spans 702–777 (LDLRGKRYEE…GSGATIVTFK (76 aa)).

The protein belongs to the DNA mismatch repair MutS family. MutS2 subfamily. Homodimer. Binds to stalled ribosomes, contacting rRNA.

Functionally, endonuclease that is involved in the suppression of homologous recombination and thus may have a key role in the control of bacterial genetic diversity. Its function is as follows. Acts as a ribosome collision sensor, splitting the ribosome into its 2 subunits. Detects stalled/collided 70S ribosomes which it binds and splits by an ATP-hydrolysis driven conformational change. Acts upstream of the ribosome quality control system (RQC), a ribosome-associated complex that mediates the extraction of incompletely synthesized nascent chains from stalled ribosomes and their subsequent degradation. Probably generates substrates for RQC. The polypeptide is Endonuclease MutS2 (Streptococcus pneumoniae serotype 19F (strain G54)).